Consider the following 77-residue polypeptide: Sec-independent protein translocase protein TatA (77 aa).

Residues 1 to 21 (MGSFSIWHWLVVLAIVVLVFG) form a helical membrane-spanning segment. The tract at residues 40-77 (KEGMKGAEEENTQPPPSHQQVTGHSIKSEIEEKDQTKV) is disordered. Residues 65 to 77 (IKSEIEEKDQTKV) are compositionally biased toward basic and acidic residues.

The protein belongs to the TatA/E family. As to quaternary structure, the Tat system comprises two distinct complexes: a TatABC complex, containing multiple copies of TatA, TatB and TatC subunits, and a separate TatA complex, containing only TatA subunits. Substrates initially bind to the TatABC complex, which probably triggers association of the separate TatA complex to form the active translocon.

Its subcellular location is the cell inner membrane. Functionally, part of the twin-arginine translocation (Tat) system that transports large folded proteins containing a characteristic twin-arginine motif in their signal peptide across membranes. TatA could form the protein-conducting channel of the Tat system. This Nitrosomonas eutropha (strain DSM 101675 / C91 / Nm57) protein is Sec-independent protein translocase protein TatA.